The primary structure comprises 403 residues: Na(+)-translocating NADH-quinone reductase subunit B (403 aa).

9 helical membrane-spanning segments follow: residues 56-76 (MMITVWLCTFPAMFFGMWNTG), 121-141 (AYFLPIYAVTFIVGGFWEVLF), 163-183 (ILPPTIPLWQVALGISFGVVI), 220-240 (WTAVDGYAGATALSLGFAGGI), 258-278 (IHGSIGETSTLAIFIGGAVLI), 287-307 (IVTGVMLGMIALSTLFNLIGS), 312-332 (LFGMPWYWHMVVGGFAFGMIF), 348-368 (WVFGILIGVMVVLIRVVNPAF), and 371-391 (GMMLAILFANLCAPLIDHFVI). Thr-230 is subject to FMN phosphoryl threonine.

The protein belongs to the NqrB/RnfD family. In terms of assembly, composed of six subunits; NqrA, NqrB, NqrC, NqrD, NqrE and NqrF. It depends on FMN as a cofactor.

Its subcellular location is the cell inner membrane. It carries out the reaction a ubiquinone + n Na(+)(in) + NADH + H(+) = a ubiquinol + n Na(+)(out) + NAD(+). Functionally, NQR complex catalyzes the reduction of ubiquinone-1 to ubiquinol by two successive reactions, coupled with the transport of Na(+) ions from the cytoplasm to the periplasm. NqrA to NqrE are probably involved in the second step, the conversion of ubisemiquinone to ubiquinol. In Stutzerimonas stutzeri (strain A1501) (Pseudomonas stutzeri), this protein is Na(+)-translocating NADH-quinone reductase subunit B.